The primary structure comprises 319 residues: Replication factor C small subunit 2 (319 aa).

Residue 44–51 coordinates ATP; it reads GPPGTGKT.

It belongs to the activator 1 small subunits family. RfcS subfamily. As to quaternary structure, heteromultimer composed of small subunits (RfcS) and large subunits (RfcL).

Functionally, part of the RFC clamp loader complex which loads the PCNA sliding clamp onto DNA. The polypeptide is Replication factor C small subunit 2 (Pyrobaculum aerophilum (strain ATCC 51768 / DSM 7523 / JCM 9630 / CIP 104966 / NBRC 100827 / IM2)).